The sequence spans 157 residues: Xanthine-guanine phosphoribosyltransferase (157 aa).

5-phospho-alpha-D-ribose 1-diphosphate-binding positions include 42 to 43 and 93 to 101; these read RG and DDLVDTGNT. Asp94 contacts Mg(2+). The guanine site is built by Asp97 and Ile140. Xanthine is bound by residues Asp97 and Ile140. GMP is bound by residues 97 to 101 and 139 to 140; these read DTGNT and WI.

Belongs to the purine/pyrimidine phosphoribosyltransferase family. XGPT subfamily. As to quaternary structure, homotetramer. It depends on Mg(2+) as a cofactor.

It localises to the cell inner membrane. The enzyme catalyses GMP + diphosphate = guanine + 5-phospho-alpha-D-ribose 1-diphosphate. The catalysed reaction is XMP + diphosphate = xanthine + 5-phospho-alpha-D-ribose 1-diphosphate. It catalyses the reaction IMP + diphosphate = hypoxanthine + 5-phospho-alpha-D-ribose 1-diphosphate. It functions in the pathway purine metabolism; GMP biosynthesis via salvage pathway; GMP from guanine: step 1/1. The protein operates within purine metabolism; XMP biosynthesis via salvage pathway; XMP from xanthine: step 1/1. Purine salvage pathway enzyme that catalyzes the transfer of the ribosyl-5-phosphate group from 5-phospho-alpha-D-ribose 1-diphosphate (PRPP) to the N9 position of the 6-oxopurines guanine and xanthine to form the corresponding ribonucleotides GMP (guanosine 5'-monophosphate) and XMP (xanthosine 5'-monophosphate), with the release of PPi. To a lesser extent, also acts on hypoxanthine. In Actinobacillus pleuropneumoniae serotype 5b (strain L20), this protein is Xanthine-guanine phosphoribosyltransferase.